A 1578-amino-acid chain; its full sequence is DNA-directed RNA polymerase subunit beta' (1578 aa).

4 residues coordinate Zn(2+): Cys101, Cys103, Cys115, and Cys118. 3 residues coordinate Mg(2+): Asp1286, Asp1288, and Asp1290.

The protein belongs to the RNA polymerase beta' chain family. RpoC1 subfamily. As to quaternary structure, in plastids the minimal PEP RNA polymerase catalytic core is composed of four subunits: alpha, beta, beta', and beta''. When a (nuclear-encoded) sigma factor is associated with the core the holoenzyme is formed, which can initiate transcription. Mg(2+) serves as cofactor. Requires Zn(2+) as cofactor.

The protein localises to the plastid. The protein resides in the chloroplast. It carries out the reaction RNA(n) + a ribonucleoside 5'-triphosphate = RNA(n+1) + diphosphate. Functionally, DNA-dependent RNA polymerase catalyzes the transcription of DNA into RNA using the four ribonucleoside triphosphates as substrates. This Tupiella akineta (Green alga) protein is DNA-directed RNA polymerase subunit beta'.